The primary structure comprises 168 residues: Large ribosomal subunit protein uL16 (168 aa).

Belongs to the universal ribosomal protein uL16 family.

The protein is Large ribosomal subunit protein uL16 of Thermofilum pendens (strain DSM 2475 / Hrk 5).